Here is a 370-residue protein sequence, read N- to C-terminus: Mitogen-activated protein kinase 3 (370 aa).

Residues 38–324 (RPPIIPIGRG…VEQALNHQYL (287 aa)) enclose the Protein kinase domain. Residues 44–52 (IGRGAYGIV) and Lys-67 contribute to the ATP site. The active-site Proton acceptor is Asp-164. At Thr-196 the chain carries Phosphothreonine. The TXY signature appears at 196–198 (TEY). The residue at position 198 (Tyr-198) is a Phosphotyrosine. Thr-201 bears the Phosphothreonine mark.

Belongs to the protein kinase superfamily. CMGC Ser/Thr protein kinase family. MAP kinase subfamily. As to quaternary structure, interacts with DSPTP1B/MKP2, NDPK2 and VIP1. The interaction with DSPTP1B/MKP2 is repressed by fungal elicitation. Binds to LIP5. Interacts with VQ4. Interacts with RACK1A, RACK1B and RACK1C. Interacts with FLZ9. Interacts with MKK5. Dually phosphorylated on Thr-196 and Tyr-198, which activates the enzyme. Dephosphorylated by DSPTP1B/MKP2.

The protein localises to the cytoplasm. It is found in the nucleus. The protein resides in the cell cortex. It carries out the reaction L-seryl-[protein] + ATP = O-phospho-L-seryl-[protein] + ADP + H(+). The enzyme catalyses L-threonyl-[protein] + ATP = O-phospho-L-threonyl-[protein] + ADP + H(+). With respect to regulation, activated by threonine and tyrosine phosphorylation. Activated by MAP kinase kinases MKK4, MKK5, MKK7 and MKK9. Activated in response to hydrogen peroxide, ozone, salt stress and flagellin bacterial elicitor. Triggered by Agrobacterium upon T-DNA transfer. Repressed by DSPTP1B/MKP2-mediated dephosphorylation. Functionally, involved in oxidative stress-mediated signaling cascade (such as ozone). Involved in the innate immune MAP kinase signaling cascade (MEKK1, MKK4/MKK5 and MPK3/MPK6) downstream of bacterial flagellin receptor FLS2. May be involved in hypersensitive response (HR)-mediated signaling cascade by modulating LIP5 phosphorylation and subsequent multivesicular bodies (MVBs) trafficking. May phosphorylate regulators of WRKY transcription factors. Mediates the phosphorylation of VIP1 and subsequent stress genes transcription in response to Agrobacterium. MKK9-MPK3/MPK6 module phosphorylates and activates EIN3, leading to the promotion of EIN3-mediated transcription in ethylene signaling. MPK3/MPK6 cascade regulates camalexin synthesis through transcriptional regulation of the biosynthetic genes after pathogen infection. YDA-MKK4/MKK5-MPK3/MPK6 module regulates stomatal cell fate before the guard mother cell (GMC) is specified. When activated, reinforces the feedback loop by phosphorylating BASL, and inhibits stomatal fate by phosphorylating SPCH. This MAPK cascade also functions downstream of the ER receptor in regulating coordinated local cell proliferation, which shapes the morphology of plant organs. The sequence is that of Mitogen-activated protein kinase 3 from Arabidopsis thaliana (Mouse-ear cress).